Consider the following 356-residue polypeptide: Fructose-1,6-bisphosphatase class 1 (356 aa).

Positions Met1–Leu26 are disordered. The Mg(2+) site is built by Glu101, Asp120, Leu122, and Asp123. Substrate-binding positions include Asp123–Ser126 and Asn211. Glu283 is a Mg(2+) binding site.

It belongs to the FBPase class 1 family. As to quaternary structure, homotetramer. Requires Mg(2+) as cofactor.

It localises to the cytoplasm. The enzyme catalyses beta-D-fructose 1,6-bisphosphate + H2O = beta-D-fructose 6-phosphate + phosphate. It functions in the pathway carbohydrate biosynthesis; Calvin cycle. In Bradyrhizobium sp. (strain ORS 278), this protein is Fructose-1,6-bisphosphatase class 1.